An 87-amino-acid polypeptide reads, in one-letter code: Small ribosomal subunit protein uS19 (87 aa).

The segment at 1–29 (MARSLKKGPFVDHHLQKKVDVQNKEGTKK) is disordered. Residues 9 to 28 (PFVDHHLQKKVDVQNKEGTK) show a composition bias toward basic and acidic residues.

The protein belongs to the universal ribosomal protein uS19 family.

Its function is as follows. Protein S19 forms a complex with S13 that binds strongly to the 16S ribosomal RNA. This chain is Small ribosomal subunit protein uS19, found in Protochlamydia amoebophila (strain UWE25).